Here is a 201-residue protein sequence, read N- to C-terminus: FMN-dependent NADH:quinone oxidoreductase (201 aa).

FMN is bound by residues Ser-9, 16–18, and 93–96; these read SVS and MYNF.

It belongs to the azoreductase type 1 family. Homodimer. Requires FMN as cofactor.

The enzyme catalyses 2 a quinone + NADH + H(+) = 2 a 1,4-benzosemiquinone + NAD(+). It carries out the reaction N,N-dimethyl-1,4-phenylenediamine + anthranilate + 2 NAD(+) = 2-(4-dimethylaminophenyl)diazenylbenzoate + 2 NADH + 2 H(+). Its function is as follows. Quinone reductase that provides resistance to thiol-specific stress caused by electrophilic quinones. In terms of biological role, also exhibits azoreductase activity. Catalyzes the reductive cleavage of the azo bond in aromatic azo compounds to the corresponding amines. This chain is FMN-dependent NADH:quinone oxidoreductase, found in Gluconacetobacter diazotrophicus (strain ATCC 49037 / DSM 5601 / CCUG 37298 / CIP 103539 / LMG 7603 / PAl5).